Here is a 338-residue protein sequence, read N- to C-terminus: 1-aminocyclopropane-1-carboxylate deaminase (338 aa).

Residue Lys51 is modified to N6-(pyridoxal phosphate)lysine. Ser78 functions as the Nucleophile in the catalytic mechanism.

This sequence belongs to the ACC deaminase/D-cysteine desulfhydrase family. Homotrimer. The cofactor is pyridoxal 5'-phosphate.

The enzyme catalyses 1-aminocyclopropane-1-carboxylate + H2O = 2-oxobutanoate + NH4(+). Functionally, catalyzes a cyclopropane ring-opening reaction, the irreversible conversion of 1-aminocyclopropane-1-carboxylate (ACC) to ammonia and alpha-ketobutyrate. Allows growth on ACC as a nitrogen source. The chain is 1-aminocyclopropane-1-carboxylate deaminase from Burkholderia orbicola (strain MC0-3).